Reading from the N-terminus, the 296-residue chain is Putative S-adenosyl-L-methionine-dependent methyltransferase MAV_4764 (296 aa).

Residues D121 and 150–151 contribute to the S-adenosyl-L-methionine site; that span reads DL.

The protein belongs to the UPF0677 family.

Exhibits S-adenosyl-L-methionine-dependent methyltransferase activity. This chain is Putative S-adenosyl-L-methionine-dependent methyltransferase MAV_4764, found in Mycobacterium avium (strain 104).